Here is a 461-residue protein sequence, read N- to C-terminus: Piperine synthase (461 aa).

Residues His168 and Asp387 each act as proton acceptor in the active site. Positions Ser459–Met461 match the Microbody targeting signal motif.

It belongs to the plant acyltransferase family. As to quaternary structure, monomer. Confined to immature fruits perisperm. Also detectable in roots.

It is found in the cytoplasm. The catalysed reaction is piperidine + (E,E)-piperoyl-CoA = piperine + CoA + H(+). It carries out the reaction pyrrolidine + (E,E)-piperoyl-CoA = piperyline + CoA + H(+). The enzyme catalyses (E,E)-piperoyl-CoA + 2-methylpropan-1-amine = (E,E)-piperlonguminine + CoA + H(+). Its pathway is aromatic compound metabolism. In terms of biological role, involved in the biosynthesis of aromatic piperamides natural products such as piperine (1-piperoyl-piperidine), the pungent principle contributing, together with several terpenoids, to the aromatic properties of black pepper fruits, and displaying numerous pharmacological activities such as antiproliferative, antitumor, antiangiogenesis, antioxidant, antidiabetic, antiobesity, cardioprotective, antimicrobial, antiaging, and immunomodulatory effects. Mediates mainly the conversion of piperidine and piperoyl-CoA to piperine. Can also use pyrrolidine and isobutylamine as acceptors and 3,4-methylenedioxycinnamoyl-CoA as an alternative CoA-donor with a lower efficiency. The sequence is that of Piperine synthase from Piper nigrum (Black pepper).